The chain runs to 234 residues: Protein SSP120 (234 aa).

The signal sequence occupies residues 1 to 22 (MRFLRGFVFSLAFTLYKVTATA). EF-hand domains follow at residues 52–87 (LKDY…NREE) and 108–143 (MAKR…GNKF). Residue Thr-212 is modified to Phosphothreonine.

This is Protein SSP120 (SSP120) from Saccharomyces cerevisiae (strain ATCC 204508 / S288c) (Baker's yeast).